Here is a 438-residue protein sequence, read N- to C-terminus: GTPase Obg (438 aa).

Residues 6-164 (AEFVDRVKIF…RWLELELKIL (159 aa)) form the Obg domain. In terms of domain architecture, OBG-type G spans 165 to 335 (ADVGLVGYPN…LLDRVASIVR (171 aa)). GTP is bound by residues 171-178 (GYPNVGKS), 196-200 (FTTLV), 217-220 (DIPG), 287-290 (NKID), and 316-318 (SAV). S178 and T198 together coordinate Mg(2+). The 81-residue stretch at 358–438 (VWRKLPERFE…IGNFEFEYRE (81 aa)) folds into the OCT domain.

This sequence belongs to the TRAFAC class OBG-HflX-like GTPase superfamily. OBG GTPase family. As to quaternary structure, monomer. Mg(2+) is required as a cofactor.

The protein resides in the cytoplasm. An essential GTPase which binds GTP, GDP and possibly (p)ppGpp with moderate affinity, with high nucleotide exchange rates and a fairly low GTP hydrolysis rate. Plays a role in control of the cell cycle, stress response, ribosome biogenesis and in those bacteria that undergo differentiation, in morphogenesis control. The chain is GTPase Obg from Thermotoga neapolitana (strain ATCC 49049 / DSM 4359 / NBRC 107923 / NS-E).